The following is a 457-amino-acid chain: 1-carboxybiuret hydrolase subunit AtzE (457 aa).

Active-site charge relay system residues include Lys-74 and Ser-150. Residue Ser-174 is the Acyl-ester intermediate of the active site.

It belongs to the amidase family. In terms of assembly, heterotetramer consisting of 2 AtzE and 2 AtzG subunits.

The enzyme catalyses 1-carboxybiuret + H2O = urea-1,3-dicarboxylate + NH4(+). The protein operates within xenobiotic degradation; atrazine degradation. In terms of biological role, hydrolyzes 1-carboxybiuret to urea-1,3-dicarboxylate and NH(3). In Pseudomonas sp. (strain ADP), this protein is 1-carboxybiuret hydrolase subunit AtzE.